A 177-amino-acid polypeptide reads, in one-letter code: Bifunctional protein PyrR (177 aa).

The PRPP-binding motif lies at 99-111 (LVLIDDVIYKGRT).

It belongs to the purine/pyrimidine phosphoribosyltransferase family. PyrR subfamily.

The catalysed reaction is UMP + diphosphate = 5-phospho-alpha-D-ribose 1-diphosphate + uracil. Regulates the transcription of the pyrimidine nucleotide (pyr) operon in response to exogenous pyrimidines. Its function is as follows. Also displays a weak uracil phosphoribosyltransferase activity which is not physiologically significant. The protein is Bifunctional protein PyrR of Picosynechococcus sp. (strain ATCC 27264 / PCC 7002 / PR-6) (Agmenellum quadruplicatum).